Consider the following 858-residue polypeptide: Envelope glycoprotein gp160 (858 aa).

Residues 1–19 (MMNQLLIAILLASACLVYC) form the signal peptide. The Extracellular segment spans residues 20–679 (TQYVTVFYGV…LTSWVKYIQY (660 aa)). Residue Asn-34 is glycosylated (N-linked (GlcNAc...) asparagine; by host). Cysteines 41 and 54 form a disulfide. Residues Asn-67, Asn-76, Asn-119, Asn-120, Asn-151, Asn-166, Asn-179, Asn-192, Asn-193, Asn-196, Asn-206, Asn-238, Asn-241, Asn-248, Asn-272, Asn-278, Asn-289, Asn-300, Asn-310, Asn-367, Asn-371, Asn-400, Asn-410, Asn-447, Asn-463, and Asn-466 are each glycosylated (N-linked (GlcNAc...) asparagine; by host). Cystine bridges form between Cys-98/Cys-214, Cys-105/Cys-205, Cys-110/Cys-163, Cys-227/Cys-257, and Cys-237/Cys-249. Positions 110-162 (CSSTESSTGNNTTSKSTSTTTTTPTDQEQEISEDTPCARADNCSGLGEEETIN) are V1. A compositionally biased stretch (low complexity) spans 111–134 (SSTESSTGNNTTSKSTSTTTTTPT). Residues 111–142 (SSTESSTGNNTTSKSTSTTTTTPTDQEQEISE) form a disordered region. Residues 163–205 (CQFNMTGLERDKKKQYNETWYSKDVVCETNNSTNQTQCYMNHC) form a V2 region. The interval 305-339 (CKRPGNKTVKQIMLMSGHVFHSHYQPINKRPRQAW) is V3. A disulfide bridge links Cys-305 with Cys-340. 2 disulfide bridges follow: Cys-392–Cys-446 and Cys-399–Cys-419. The tract at residues 399-419 (CNMTWFLNWIENKTHRNYAPC) is V4. The V5 stretch occupies residues 462–469 (NNQTNITF). Positions 512–532 (GVFVLGFLGFLATAGSAMGAA) are fusion peptide. The interval 575–591 (LQARVTAIEKYLQDQAR) is immunosuppression. Residues Asn-611, Asn-620, and Asn-636 are each glycosylated (N-linked (GlcNAc...) asparagine; by host). Residues 624 to 645 (QEWEKQVRYLEANISKSLEQAQ) adopt a coiled-coil conformation. Residues 657–678 (KLNSWDIFGNWFDLTSWVKYIQ) form an MPER; binding to GalCer region. Residues 680–700 (GVLIIVAVIALRIVIYVVQML) traverse the membrane as a helical segment. At 701-858 (SRLRKGYRPV…IRQGAEIALL (158 aa)) the chain is on the cytoplasmic side. Positions 707–710 (YRPV) match the YXXV motif; contains endocytosis signal motif. Residue Cys-773 is the site of S-palmitoyl cysteine; by host attachment. Residues 857 to 858 (LL) carry the Di-leucine internalization motif motif.

As to quaternary structure, the mature envelope protein (Env) consists of a homotrimer of non-covalently associated gp120-gp41 heterodimers. The resulting complex protrudes from the virus surface as a spike. There seems to be as few as 10 spikes on the average virion. Interacts with human CD4, CCR5 and CXCR4, to form a P4HB/PDI-CD4-CXCR4-gp120 complex. Gp120 also interacts with the C-type lectins CD209/DC-SIGN and CLEC4M/DC-SIGNR (collectively referred to as DC-SIGN(R)). Gp120 and gp41 interact with GalCer. In terms of assembly, the mature envelope protein (Env) consists of a homotrimer of non-covalently associated gp120-gp41 heterodimers. The resulting complex protrudes from the virus surface as a spike. There seems to be as few as 10 spikes on the average virion. Post-translationally, specific enzymatic cleavages in vivo yield mature proteins. Envelope glycoproteins are synthesized as an inactive precursor that is heavily N-glycosylated and processed likely by host cell furin in the Golgi to yield the mature SU and TM proteins. The cleavage site between SU and TM requires the minimal sequence [KR]-X-[KR]-R. In terms of processing, palmitoylation of the transmembrane protein and of Env polyprotein (prior to its proteolytic cleavage) is essential for their association with host cell membrane lipid rafts. Palmitoylation is therefore required for envelope trafficking to classical lipid rafts, but not for viral replication.

It is found in the virion membrane. Its subcellular location is the host cell membrane. The protein localises to the host endosome membrane. Functionally, the surface protein gp120 (SU) attaches the virus to the host lymphoid cell by binding to the primary receptor CD4. This interaction induces a structural rearrangement creating a high affinity binding site for a chemokine coreceptor like CXCR4 and/or CCR5. This peculiar 2 stage receptor-interaction strategy allows gp120 to maintain the highly conserved coreceptor-binding site in a cryptic conformation, protected from neutralizing antibodies. Since CD4 also displays a binding site for the disulfide-isomerase P4HB/PDI, a P4HB/PDI-CD4-CXCR4-gp120 complex may form. In that complex, P4HB/PDI could reach and reduce gp120 disulfide bonds, causing major conformational changes in gp120. TXN, another PDI family member could also be involved in disulfide rearrangements in Env during fusion. These changes are transmitted to the transmembrane protein gp41 and are thought to activate its fusogenic potential by unmasking its fusion peptide. In terms of biological role, the surface protein gp120 is a ligand for CD209/DC-SIGN and CLEC4M/DC-SIGNR, which are respectively found on dendritic cells (DCs), and on endothelial cells of liver sinusoids and lymph node sinuses. These interactions allow capture of viral particles at mucosal surfaces by these cells and subsequent transmission to permissive cells. DCs are professional antigen presenting cells, critical for host immunity by inducing specific immune responses against a broad variety of pathogens. They act as sentinels in various tissues where they take up antigen, process it, and present it to T-cells following migration to lymphoid organs. HIV subverts the migration properties of dendritic cells to gain access to CD4+ T-cells in lymph nodes. Virus transmission to permissive T-cells occurs either in trans (without DCs infection, through viral capture and transmission), or in cis (following DCs productive infection, through the usual CD4-gp120 interaction), thereby inducing a robust infection. In trans infection, bound virions remain infectious over days and it is proposed that they are not degraded, but protected in non-lysosomal acidic organelles within the DCs close to the cell membrane thus contributing to the viral infectious potential during DCs' migration from the periphery to the lymphoid tissues. On arrival at lymphoid tissues, intact virions recycle back to DCs' cell surface allowing virus transmission to CD4+ T-cells. Virion capture also seems to lead to MHC-II-restricted viral antigen presentation, and probably to the activation of HIV-specific CD4+ cells. The transmembrane protein gp41 (TM) acts as a class I viral fusion protein. Under the current model, the protein has at least 3 conformational states: pre-fusion native state, pre-hairpin intermediate state, and post-fusion hairpin state. During fusion of viral and target intracellular membranes, the coiled coil regions (heptad repeats) assume a trimer-of-hairpins structure, positioning the fusion peptide in close proximity to the C-terminal region of the ectodomain. The formation of this structure appears to drive apposition and subsequent fusion of viral and target cell membranes. Complete fusion occurs in host cell endosomes and is dynamin-dependent, however some lipid transfer might occur at the plasma membrane. The virus undergoes clathrin-dependent internalization long before endosomal fusion, thus minimizing the surface exposure of conserved viral epitopes during fusion and reducing the efficacy of inhibitors targeting these epitopes. Membranes fusion leads to delivery of the nucleocapsid into the cytoplasm. Its function is as follows. The envelope glycoprotein gp160 precursor down-modulates cell surface CD4 antigen by interacting with it in the endoplasmic reticulum and blocking its transport to the cell surface. Functionally, the gp120-gp41 heterodimer seems to contribute to T-cell depletion during HIV-1 infection. The envelope glycoproteins expressed on the surface of infected cells induce apoptosis through an interaction with uninfected cells expressing the receptor (CD4) and the coreceptors CXCR4 or CCR5. This type of bystander killing may be obtained by at least three distinct mechanisms. First, the interaction between the 2 cells can induce cellular fusion followed by nuclear fusion within the syncytium. Syncytia are condemned to die from apoptosis. Second, the 2 interacting cells may not fuse entirely and simply exchange plasma membrane lipids, after a sort of hemifusion process, followed by rapid death. Third, it is possible that virus-infected cells, on the point of undergoing apoptosis, fuse with CD4-expressing cells, in which case apoptosis is rapidly transmitted from one cell to the other and thus occurs in a sort of contagious fashion. In terms of biological role, the gp120-gp41 heterodimer allows rapid transcytosis of the virus through CD4 negative cells such as simple epithelial monolayers of the intestinal, rectal and endocervical epithelial barriers. Both gp120 and gp41 specifically recognize glycosphingolipids galactosyl-ceramide (GalCer) or 3' sulfo-galactosyl-ceramide (GalS) present in the lipid rafts structures of epithelial cells. Binding to these alternative receptors allows the rapid transcytosis of the virus through the epithelial cells. This transcytotic vesicle-mediated transport of virions from the apical side to the basolateral side of the epithelial cells does not involve infection of the cells themselves. This is Envelope glycoprotein gp160 (env) from Homo sapiens (Human).